Reading from the N-terminus, the 383-residue chain is Chorismate synthase (383 aa).

An NADP(+)-binding site is contributed by Arg48. Residues 125–127 (RSS), Gly286, 301–305 (HAPTS), and Arg328 contribute to the FMN site. The tract at residues 361–383 (PDRLDDNPGQYETEYHPSSPQTN) is disordered.

This sequence belongs to the chorismate synthase family. It depends on FMNH2 as a cofactor.

It catalyses the reaction 5-O-(1-carboxyvinyl)-3-phosphoshikimate = chorismate + phosphate. It participates in metabolic intermediate biosynthesis; chorismate biosynthesis; chorismate from D-erythrose 4-phosphate and phosphoenolpyruvate: step 7/7. Catalyzes the anti-1,4-elimination of the C-3 phosphate and the C-6 proR hydrogen from 5-enolpyruvylshikimate-3-phosphate (EPSP) to yield chorismate, which is the branch point compound that serves as the starting substrate for the three terminal pathways of aromatic amino acid biosynthesis. This reaction introduces a second double bond into the aromatic ring system. The sequence is that of Chorismate synthase from Haloquadratum walsbyi (strain DSM 16790 / HBSQ001).